Reading from the N-terminus, the 326-residue chain is Ornithine carbamoyltransferase (326 aa).

Carbamoyl phosphate is bound by residues 54–57 (STRT), Q81, R105, and 132–135 (HPTQ). L-ornithine-binding positions include N164, D225, and 229 to 230 (SM). Residues 266–267 (CL) and R311 each bind carbamoyl phosphate.

Belongs to the aspartate/ornithine carbamoyltransferase superfamily. OTCase family.

Its subcellular location is the cytoplasm. The enzyme catalyses carbamoyl phosphate + L-ornithine = L-citrulline + phosphate + H(+). The protein operates within amino-acid biosynthesis; L-arginine biosynthesis; L-arginine from L-ornithine and carbamoyl phosphate: step 1/3. Functionally, reversibly catalyzes the transfer of the carbamoyl group from carbamoyl phosphate (CP) to the N(epsilon) atom of ornithine (ORN) to produce L-citrulline. In Streptococcus mutans serotype c (strain ATCC 700610 / UA159), this protein is Ornithine carbamoyltransferase (argF).